A 197-amino-acid polypeptide reads, in one-letter code: NADH-quinone oxidoreductase subunit C (197 aa).

It belongs to the complex I 30 kDa subunit family. In terms of assembly, NDH-1 is composed of 14 different subunits. Subunits NuoB, C, D, E, F, and G constitute the peripheral sector of the complex.

The protein localises to the cell inner membrane. It carries out the reaction a quinone + NADH + 5 H(+)(in) = a quinol + NAD(+) + 4 H(+)(out). NDH-1 shuttles electrons from NADH, via FMN and iron-sulfur (Fe-S) centers, to quinones in the respiratory chain. The immediate electron acceptor for the enzyme in this species is believed to be ubiquinone. Couples the redox reaction to proton translocation (for every two electrons transferred, four hydrogen ions are translocated across the cytoplasmic membrane), and thus conserves the redox energy in a proton gradient. The protein is NADH-quinone oxidoreductase subunit C of Rickettsia typhi (strain ATCC VR-144 / Wilmington).